A 413-amino-acid chain; its full sequence is Probable alpha-tubulin polyglutamylase Ttll1 (413 aa).

A TTL domain is found at 2–370 (ASKKLKYKTD…DDWNDDSSKT (369 aa)). ATP contacts are provided by residues 184–187 (SRYI), K197, and D199.

The protein belongs to the tubulin polyglutamylase family.

It is found in the cytoplasm. The protein localises to the cytoskeleton. It localises to the cilium basal body. Its subcellular location is the contractile vacuole. Functionally, probable tubulin polyglutamylase with a strong preference for alpha-tubulin. Modifies alpha-tubulin, generating side chains of glutamate on the gamma-carboxyl groups of specific glutamate residues within the C-terminal tail of alpha-tubulin. This Tetrahymena thermophila (strain SB210) protein is Probable alpha-tubulin polyglutamylase Ttll1 (Ttll1).